The primary structure comprises 268 residues: Ribosomal RNA small subunit methyltransferase A (268 aa).

6 residues coordinate S-adenosyl-L-methionine: N18, L20, G45, E66, D91, and N112.

The protein belongs to the class I-like SAM-binding methyltransferase superfamily. rRNA adenine N(6)-methyltransferase family. RsmA subfamily.

The protein localises to the cytoplasm. It carries out the reaction adenosine(1518)/adenosine(1519) in 16S rRNA + 4 S-adenosyl-L-methionine = N(6)-dimethyladenosine(1518)/N(6)-dimethyladenosine(1519) in 16S rRNA + 4 S-adenosyl-L-homocysteine + 4 H(+). Its function is as follows. Specifically dimethylates two adjacent adenosines (A1518 and A1519) in the loop of a conserved hairpin near the 3'-end of 16S rRNA in the 30S particle. May play a critical role in biogenesis of 30S subunits. The chain is Ribosomal RNA small subunit methyltransferase A from Vibrio vulnificus (strain CMCP6).